The primary structure comprises 659 residues: Threonine--tRNA ligase (659 aa).

The TGS domain occupies 7–70 (DSELIKLTLP…QQDGAIEIVT (64 aa)). The catalytic stretch occupies residues 253 to 555 (DHRKLGSELE…LIENFAGNFP (303 aa)). Residues C351, H402, and H532 each contribute to the Zn(2+) site.

This sequence belongs to the class-II aminoacyl-tRNA synthetase family. Homodimer. Zn(2+) serves as cofactor.

It is found in the cytoplasm. The enzyme catalyses tRNA(Thr) + L-threonine + ATP = L-threonyl-tRNA(Thr) + AMP + diphosphate + H(+). Catalyzes the attachment of threonine to tRNA(Thr) in a two-step reaction: L-threonine is first activated by ATP to form Thr-AMP and then transferred to the acceptor end of tRNA(Thr). Also edits incorrectly charged L-seryl-tRNA(Thr). The polypeptide is Threonine--tRNA ligase (Chloroherpeton thalassium (strain ATCC 35110 / GB-78)).